The following is a 940-amino-acid chain: Serine/threonine-protein phosphatase 1 regulatory subunit 10 (940 aa).

Residues 1-348 (MGSGPIDPKE…EPAPPSEAMD (348 aa)) form an interaction with TOX4 region. Residues 73-147 (KLLNNWLTYS…SDWMAVIRSQ (75 aa)) form the TFIIS N-terminal domain. Disordered stretches follow at residues 147–211 (QSST…FRST), 247–270 (SNVA…NTTP), 304–400 (KIKK…KSVT), and 533–905 (YVET…HGGD). Composition is skewed to basic and acidic residues over residues 153–166 (AEKD…EGKS) and 174–196 (PLTE…EKPK). K179 is covalently cross-linked (Glycyl lysine isopeptide (Lys-Gly) (interchain with G-Cter in SUMO2)). Phosphothreonine is present on T256. K262 participates in a covalent cross-link: Glycyl lysine isopeptide (Lys-Gly) (interchain with G-Cter in SUMO2). Residue S313 is modified to Phosphoserine. Over residues 325 to 336 (KTSTEPSTAKPS) the composition is skewed to low complexity. A necessary for interaction with PPP1CA region spans residues 357-433 (PPVEVPELMD…NKIKDFGEAA (77 aa)). At S382 the chain carries Phosphoserine. The tract at residues 393–408 (GRKRKSVTWPEEGKLR) is necessary for interaction with PPP1CC. The short motif at 394 to 423 (RKRKSVTWPEEGKLREYFYFELDETERVNV) is the PP1-binding motif element. Position 398 is a phosphoserine; by PKA (S398). The interval 418 to 619 (TERVNVNKIK…IKQMLVPHGL (202 aa)) is interaction with WDR82. Composition is skewed to gly residues over residues 540 to 551 (GGSGGSPDGAGG) and 565 to 579 (MGAG…GGGI). S545 carries the phosphoserine modification. Residues 583–595 (EILTSIMGSPNSH) show a composition bias toward polar residues. A Phosphoserine modification is found at S591. Basic and acidic residues predominate over residues 596-611 (PSEELLKQPDYSDKIK). Residues 644 to 655 (PPGPGGPMPGPH) show a composition bias toward pro residues. Position 665 is an omega-N-methylarginine (R665). Low complexity predominate over residues 676-690 (GDPFWDGPGDPMRGG). R693 bears the Omega-N-methylarginine mark. Residues 714 to 723 (EPPPPPPPPF) show a composition bias toward pro residues. 2 stretches are compositionally biased toward gly residues: residues 726–764 (ARGG…GMGN) and 790–845 (SSMG…GSGG). The residue at position 739 (R739) is an Omega-N-methylarginine. Basic and acidic residues-rich tracts occupy residues 862 to 886 (PHDV…HDGP) and 894 to 903 (RGHDGGHSHG). Residues 906 to 934 (MSNRPVCRHFMMKGNCRYENNCAFYHPGV) form a C3H1-type zinc finger.

In terms of assembly, component of the PNUTS-PP1 complex (also named PTW/PP1 complex), composed of PPP1R10/PNUTS, TOX4, WDR82, and PPP1CA (or PPP1CB or PPP1CC). In terms of processing, phosphorylated on Ser-398 by PKA within the region necessary for interaction with PPP1CA.

The protein localises to the nucleus. It is found in the chromosome. In terms of biological role, substrate-recognition component of the PNUTS-PP1 protein phosphatase complex, a protein phosphatase 1 (PP1) complex that promotes RNA polymerase II transcription pause-release, allowing transcription elongation. Promoter-proximal pausing by RNA polymerase II is a transcription halt following transcription initiation but prior to elongation, which acts as a checkpoint to control that transcripts are favorably configured for transcriptional elongation. The PNUTS-PP1 complex mediates the release of RNA polymerase II from promoter-proximal region of genes by catalyzing dephosphorylation of proteins involved in transcription, such as AFF4, CDK9, MEPCE, INTS12, NCBP1, POLR2M/GDOWN1 and SUPT6H. The PNUTS-PP1 complex also regulates RNA polymerase II transcription termination by mediating dephosphorylation of SUPT5H in termination zones downstream of poly(A) sites, thereby promoting deceleration of RNA polymerase II transcription. PNUTS-PP1 complex is also involved in the response to replication stress by mediating dephosphorylation of POLR2A at 'Ser-5' of the CTD, promoting RNA polymerase II degradation. The PNUTS-PP1 complex also plays a role in the control of chromatin structure and cell cycle progression during the transition from mitosis into interphase. PNUTS-PP1 complex mediates dephosphorylation of MYC, promoting MYC stability by preventing MYC ubiquitination by the SCF(FBXW7) complex. In addition to acts as a substrate-recognition component, PPP1R10/PNUTS also acts as a nuclear targeting subunit for the PNUTS-PP1 complex. In some context, PPP1R10/PNUTS also acts as an inhibitor of protein phosphatase 1 (PP1) activity by preventing access to substrates, such as RB. The sequence is that of Serine/threonine-protein phosphatase 1 regulatory subunit 10 (PPP1R10) from Macaca mulatta (Rhesus macaque).